The following is a 517-amino-acid chain: Ribose import ATP-binding protein RbsA 2 (517 aa).

ABC transporter domains follow at residues 10–245 (LRIE…GRSI) and 255–498 (DAGE…VSTH). 42–49 (GENGAGKS) contacts ATP. The tract at residues 497–517 (THTGNSPHSGGTDGTEASRGH) is disordered.

It belongs to the ABC transporter superfamily. Ribose importer (TC 3.A.1.2.1) family. The complex is composed of an ATP-binding protein (RbsA), two transmembrane proteins (RbsC) and a solute-binding protein (RbsB).

It localises to the cell membrane. It carries out the reaction D-ribose(out) + ATP + H2O = D-ribose(in) + ADP + phosphate + H(+). Functionally, part of the ABC transporter complex RbsABC involved in ribose import. Responsible for energy coupling to the transport system. This chain is Ribose import ATP-binding protein RbsA 2, found in Streptomyces coelicolor (strain ATCC BAA-471 / A3(2) / M145).